The primary structure comprises 102 residues: MQTQCTVLQLLVLVALCSCGGILKEKYFQKGVDYLTSHIPIPVVKDVVKSAAKQLVHKISKNQQLCLIVDTVQWCNKSCLAAENKEGYCHGTKCKCGIKVSY.

Positions 1-19 are cleaved as a signal peptide; sequence MQTQCTVLQLLVLVALCSC. Residues 63-102 enclose the BetaSPN-type CS-alpha/beta domain; that stretch reads QQLCLIVDTVQWCNKSCLAAENKEGYCHGTKCKCGIKVSY. 3 cysteine pairs are disulfide-bonded: cysteine 66/cysteine 89, cysteine 75/cysteine 94, and cysteine 79/cysteine 96.

It belongs to the long chain scorpion toxin family. Class 3 subfamily. Expressed by the venom gland.

It is found in the secreted. In terms of biological role, inhibits voltage-gated potassium channels. The protein is Scorpine-like-2 of Urodacus yaschenkoi (Inland robust scorpion).